Here is a 354-residue protein sequence, read N- to C-terminus: Sulfate/thiosulfate import ATP-binding protein CysA (354 aa).

The ABC transporter domain maps to 3 to 237 (IEVRGLSKRF…PATPFVYGFL (235 aa)). 35-42 (GPSGCGKT) is an ATP binding site.

It belongs to the ABC transporter superfamily. Sulfate/tungstate importer (TC 3.A.1.6) family. The complex is composed of two ATP-binding proteins (CysA), two transmembrane proteins (CysT and CysW) and a solute-binding protein (CysP).

It localises to the cell inner membrane. It carries out the reaction sulfate(out) + ATP + H2O = sulfate(in) + ADP + phosphate + H(+). It catalyses the reaction thiosulfate(out) + ATP + H2O = thiosulfate(in) + ADP + phosphate + H(+). Functionally, part of the ABC transporter complex CysAWTP involved in sulfate/thiosulfate import. Responsible for energy coupling to the transport system. The sequence is that of Sulfate/thiosulfate import ATP-binding protein CysA from Bordetella bronchiseptica (strain ATCC BAA-588 / NCTC 13252 / RB50) (Alcaligenes bronchisepticus).